A 62-amino-acid chain; its full sequence is Large ribosomal subunit protein bL28 (62 aa).

The protein belongs to the bacterial ribosomal protein bL28 family.

The protein is Large ribosomal subunit protein bL28 of Phytoplasma mali (strain AT).